A 692-amino-acid polypeptide reads, in one-letter code: Furin-like protease kpc-1 (692 aa).

A signal peptide spans 1–33 (MSNISWYRHCSVRLQLVTLALFLLLGSASLGSA). N-linked (GlcNAc...) asparagine glycosylation occurs at N3. A propeptide spanning residues 34-139 (HIDEEFEDDV…QQVAKRRVKR (106 aa)) is cleaved from the precursor. The Lumenal segment spans residues 140 to 670 (GYRRIRRHTD…RSVQMEATSS (531 aa)). The tract at residues 152-177 (DIFEEDDDGTQISKSRNRKHPDPNDP) is disordered. D176 contributes to the Ca(2+) binding site. The Peptidase S8 domain occupies 182–503 (MWYLNRGEHH…YGLMDAGAMV (322 aa)). The active-site Charge relay system is the D221. A substrate-binding site is contributed by D222. D230, D242, D247, and D249 together coordinate Ca(2+). Residues 230–249 (DISPNYDERASYDVNDRDND) form a disordered region. Position 259–260 (259–260 (EN)) interacts with substrate. H262 (charge relay system) is an active-site residue. I273 is a binding site for Ca(2+). N275 is a glycosylation site (N-linked (GlcNAc...) asparagine). Positions 276, 278, and 280 each coordinate Ca(2+). Cystine bridges form between C279-C428 and C371-C401. Substrate-binding positions include E304, 321–326 (SWGPDD), D332, and 360–363 (ASGN). Position 326 (D326) interacts with Ca(2+). D369 is a Ca(2+) binding site. The substrate site is built by D374 and Y376. E399 contributes to the Ca(2+) binding site. The active-site Charge relay system is the S436. S436 lines the substrate pocket. 2 N-linked (GlcNAc...) asparagine glycosylation sites follow: N455 and N487. Residues 512–646 (VDEQHRCRQF…ELVLYGTDRE (135 aa)) enclose the P/Homo B domain. A disulfide bridge connects residues C518 and C544. Positions 570–572 (RGD) match the Cell attachment site motif. A helical transmembrane segment spans residues 671 to 692 (GTQYSIFHVITLVILTFSQILY).

It belongs to the peptidase S8 family. Furin subfamily. As to quaternary structure, interacts (via extracellular domain) with receptor dma-1 (via extracellular domain); the interaction promotes dma-1 internalization. Requires Ca(2+) as cofactor. In terms of tissue distribution, expressed in the nervous system including the ventral nerve cord, the nerve ring and the retrovesicular ganglion, and in epithelial cells. Expressed in IL2 neurons. Expressed in PVD mechanosensory neurons. Expressed in pharynx with strong expression in the g2 pharyngeal gland cells and vpi pharyngeal intestinal valve cells. Expressed in intestine.

The protein localises to the cell membrane. It is found in the perikaryon. Its subcellular location is the cell projection. It localises to the axon. In terms of biological role, furin-like protease which cleaves proproteins at the RX(K/R)R consensus motif. During neuronal development, regulates the formation and extension of dendrite branches and cellular positioning of various type of neurons. Together with chin-1 and cdc-42, plays a role in the development of the neuropil and is required for the guidance of axons from neurons, including SubL pioneer neurons and AIY interneurons, into the nerve ring. Its role in axon guidance in glia and pioneer neurons may be through ensuring the fmi-1 protein is correctly localized to the nerve ring. Promotes the formation, extension and self-avoidance of dendritic branches of PVD and FLP mechanosensory neurons. In PVD neurons, regulates plasma membrane levels of branching receptor dma-1 by targeting it to late endosomes and thus promotes normal dendrite branching and dendrite self-avoidance. Also controls dendrite extension in AIY and D-type motoneurons, dendrite branching in AQR sensory neurons and VC4/5 motoneurons, the normal number of dendritic branches in AVL neurons and the positioning of HSN and ALM/PLM neurons. Dispensable for maintaining dendrite branching in adults. Also regulates dauer-specific dendritic branching of IL2 neurons and dauer-specific nictation behavior. Under adverse environmental conditions, may promote dauer formation by processing insulin-like proteins ins-1 and ins-18, two daf-2/InsR antagonists. The protein is Furin-like protease kpc-1 of Caenorhabditis elegans.